The primary structure comprises 493 residues: Xaa-Pro dipeptidase (493 aa).

N-acetylalanine is present on Ala2. Phosphoserine is present on Ser167. Residue His255 coordinates a dipeptide. Asp276, Asp287, and His370 together coordinate Mn(2+). Asp287 contributes to the a dipeptide binding site. His377 and Arg398 together coordinate a dipeptide. Mn(2+) contacts are provided by Glu412 and Glu452.

Belongs to the peptidase M24B family. Eukaryotic-type prolidase subfamily. In terms of assembly, homodimer. Mn(2+) is required as a cofactor.

It carries out the reaction Xaa-L-Pro dipeptide + H2O = an L-alpha-amino acid + L-proline. Dipeptidase that catalyzes the hydrolysis of dipeptides with a prolyl (Xaa-Pro) or hydroxyprolyl residue in the C-terminal position. The preferred dipeptide substrate is Gly-Pro, but other Xaa-Pro dipeptides, such as Ala-Pro, Met-Pro, Phe-Pro, Val-Pro and Leu-Pro, can be cleaved. Plays an important role in collagen metabolism because the high level of iminoacids in collagen. This chain is Xaa-Pro dipeptidase (Pepd), found in Mus musculus (Mouse).